The primary structure comprises 101 residues: Small ribosomal subunit protein bS6 (101 aa).

It belongs to the bacterial ribosomal protein bS6 family.

Its function is as follows. Binds together with bS18 to 16S ribosomal RNA. This is Small ribosomal subunit protein bS6 from Arthrobacter sp. (strain FB24).